The primary structure comprises 894 residues: Peroxisomal hydratase-dehydrogenase-epimerase (894 aa).

Short-chain dehydrogenase like stretches follow at residues 6–230 (RFDG…HKNN) and 311–523 (DFKG…CSDK). Residues valine 14, lysine 53, asparagine 99, arginine 132, tyrosine 164, lysine 168, and alanine 197 each contribute to the NADP(+) site. Tyrosine 164 acts as the Proton acceptor in catalysis. Lysine 168 acts as the Lowers pKa of active site Tyr in catalysis. The active-site Proton acceptor is tyrosine 458. Histidine 693, glycine 694, and lysine 723 together coordinate (3R)-3-hydroxydecanoyl-CoA. The interval 763–782 (KKPADRGASTAANKPPARSP) is disordered. One can recognise a MaoC-like domain in the interval 776-887 (KPPARSPDAV…VKETGKLAIS (112 aa)). Residues aspartate 803, asparagine 805, glycine 826, phenylalanine 851, and glycine 853 each contribute to the (3R)-3-hydroxydecanoyl-CoA site.

The protein belongs to the short-chain dehydrogenases/reductases (SDR) family. As to quaternary structure, monomer.

The protein resides in the peroxisome. The catalysed reaction is a (3R)-3-hydroxyacyl-CoA = a (2E)-enoyl-CoA + H2O. It carries out the reaction a (3R)-3-hydroxyacyl-CoA + NAD(+) = a 3-oxoacyl-CoA + NADH + H(+). It functions in the pathway lipid metabolism; fatty acid beta-oxidation. Its function is as follows. Second trifunctional enzyme acting on the beta-oxidation pathway for fatty acids, possessing hydratase-dehydrogenase-epimerase activities. Converts trans-2-enoyl-CoA via D-3-hydroxyacyl-CoA to 3-ketoacyl-CoA. This Neurospora crassa (strain ATCC 24698 / 74-OR23-1A / CBS 708.71 / DSM 1257 / FGSC 987) protein is Peroxisomal hydratase-dehydrogenase-epimerase (fox-2).